Reading from the N-terminus, the 141-residue chain is Large ribosomal subunit protein uL11B/uL11C (141 aa).

Belongs to the universal ribosomal protein uL11 family. In terms of assembly, part of the ribosomal stalk of the 50S ribosomal subunit. Interacts with L10 and the large rRNA to form the base of the stalk. L10 forms an elongated spine to which L12 dimers bind in a sequential fashion forming a multimeric L10(L12)X complex. One or more lysine residues are methylated.

Forms part of the ribosomal stalk which helps the ribosome interact with GTP-bound translation factors. The protein is Large ribosomal subunit protein uL11B/uL11C of Bacillus cereus (strain ATCC 14579 / DSM 31 / CCUG 7414 / JCM 2152 / NBRC 15305 / NCIMB 9373 / NCTC 2599 / NRRL B-3711).